A 470-amino-acid polypeptide reads, in one-letter code: Cysteine--tRNA ligase (470 aa).

Cys28 is a binding site for Zn(2+). The 'HIGH' region signature appears at 30-40 (PTVYNYIHIGN). Cys212, His237, and Glu241 together coordinate Zn(2+). The 'KMSKS' region motif lies at 271–275 (KMSKS). ATP is bound at residue Lys274.

It belongs to the class-I aminoacyl-tRNA synthetase family. As to quaternary structure, monomer. The cofactor is Zn(2+).

The protein resides in the cytoplasm. The catalysed reaction is tRNA(Cys) + L-cysteine + ATP = L-cysteinyl-tRNA(Cys) + AMP + diphosphate. In Ligilactobacillus salivarius (strain UCC118) (Lactobacillus salivarius), this protein is Cysteine--tRNA ligase.